Consider the following 81-residue polypeptide: CLAVATA3/ESR (CLE)-related protein 5 (81 aa).

The N-terminal stretch at 1-26 is a signal peptide; it reads MATLILKQTLIILLIIFSLQTLSSQA. 2 positions are modified to hydroxyproline: Pro73 and Pro76. Pro76 carries an O-linked (Ara...) hydroxyproline glycan.

Belongs to the CLV3/ESR signal peptide family. Post-translationally, the O-glycosylation (arabinosylation) of the hydroxyproline Pro-76 enhances binding affinity of the CLE5p peptide for its receptor. Mostly expressed in roots, and, to a lower extent, in seedlings, stems, apex, flowers and siliques.

It is found in the secreted. The protein localises to the extracellular space. Extracellular signal peptide that regulates cell fate. This is CLAVATA3/ESR (CLE)-related protein 5 from Arabidopsis thaliana (Mouse-ear cress).